Reading from the N-terminus, the 394-residue chain is GDP-mannose transporter (394 aa).

Residues 1–56 (MSNKKNEDIEMRAVEGANDFGGEKDPFLGRNSPVLRPRGREPTASAYFGKLDNSPG) are Cytoplasmic-facing. The helical transmembrane segment at 57 to 77 (ASIIAYCLSSISMTVVNKYVV) threads the bilayer. The Lumenal segment spans residues 78–81 (SGES). The chain crosses the membrane as a helical span at residues 82–102 (WNLNFFYLGVQSLVCTIAILL). Over 103-122 (SRQTGLIKNLAPFDSNKAKR) the chain is Cytoplasmic. The helical transmembrane segment at 123 to 145 (WFPVSLLLVSMIYTGANALQYLS) threads the bilayer. The Lumenal segment spans residues 146 to 150 (VPVYT). The helical transmembrane segment at 151 to 168 (IFKNLTIIVIAYGEVLWF) threads the bilayer. Topologically, residues 169-174 (GGSVTP) are cytoplasmic. A helical transmembrane segment spans residues 175–199 (LMLLSFGLMVLSSVVAAWADIQAAI). Residues 200-207 (DGVGHSAE) lie on the Lumenal side of the membrane. A helical membrane pass occupies residues 208–228 (TSAALATLNAGYAWMGLNVVC). Topologically, residues 229–249 (TSSYLLGMRKVIKKMNFKDYD) are cytoplasmic. A helical transmembrane segment spans residues 250–270 (SMFYNNLLTIPVLVVCSLLVE). Residues 271 to 288 (DWSSENLAKNFPIETRNK) are Lumenal-facing. A helical membrane pass occupies residues 289–309 (LMVGMIYSGLAAIFISYCSAW). Residues 310–317 (CIRVTSST) lie on the Cytoplasmic side of the membrane. The helical transmembrane segment at 318–338 (TYSMVGALNKLPIAISGLIFF) threads the bilayer. The Lumenal segment spans residues 339-341 (DAP). The helical transmembrane segment at 342 to 362 (ITFGSITAIAVGFVSGLVFAW) threads the bilayer. Topologically, residues 363–394 (AKVRQKAQEAGLLPTTKPTMSASAQSNRDANS) are cytoplasmic.

The protein belongs to the TPT transporter family. SLC35D subfamily. Homooligomer.

Its subcellular location is the golgi apparatus membrane. The protein resides in the cytoplasmic vesicle membrane. The protein localises to the endoplasmic reticulum membrane. Involved in the import of GDP-mannose from the cytoplasm into the Golgi lumen. The sequence is that of GDP-mannose transporter (VRG4) from Chaetomium globosum (strain ATCC 6205 / CBS 148.51 / DSM 1962 / NBRC 6347 / NRRL 1970) (Soil fungus).